The primary structure comprises 431 residues: Glucose-1-phosphate adenylyltransferase (431 aa).

A beta-D-fructose 1,6-bisphosphate-binding site is contributed by lysine 39. Arginine 40, histidine 46, and arginine 52 together coordinate AMP. Residue tyrosine 114 participates in alpha-D-glucose 1-phosphate binding. Arginine 130 contacts AMP. Residues glycine 179, 194-195 (EK), and serine 212 each bind alpha-D-glucose 1-phosphate. Arginine 386 is a binding site for AMP. Beta-D-fructose 1,6-bisphosphate-binding positions include 419–423 (REMLR) and 429–431 (QER).

This sequence belongs to the bacterial/plant glucose-1-phosphate adenylyltransferase family. As to quaternary structure, homotetramer.

The catalysed reaction is alpha-D-glucose 1-phosphate + ATP + H(+) = ADP-alpha-D-glucose + diphosphate. The protein operates within glycan biosynthesis; glycogen biosynthesis. With respect to regulation, allosterically activated by fructose-1,6-bisphosphate (F16BP) and inhibited by AMP. Involved in the biosynthesis of ADP-glucose, a building block required for the elongation reactions to produce glycogen. Catalyzes the reaction between ATP and alpha-D-glucose 1-phosphate (G1P) to produce pyrophosphate and ADP-Glc. This Enterobacter sp. (strain 638) protein is Glucose-1-phosphate adenylyltransferase.